A 184-amino-acid chain; its full sequence is ATP synthase subunit b 1 (184 aa).

The helical transmembrane segment at Asn36–Val55 threads the bilayer.

The protein belongs to the ATPase B chain family. As to quaternary structure, F-type ATPases have 2 components, F(1) - the catalytic core - and F(0) - the membrane proton channel. F(1) has five subunits: alpha(3), beta(3), gamma(1), delta(1), epsilon(1). F(0) has four main subunits: a(1), b(1), b'(1) and c(10-14). The alpha and beta chains form an alternating ring which encloses part of the gamma chain. F(1) is attached to F(0) by a central stalk formed by the gamma and epsilon chains, while a peripheral stalk is formed by the delta, b and b' chains.

The protein resides in the cellular thylakoid membrane. F(1)F(0) ATP synthase produces ATP from ADP in the presence of a proton or sodium gradient. F-type ATPases consist of two structural domains, F(1) containing the extramembraneous catalytic core and F(0) containing the membrane proton channel, linked together by a central stalk and a peripheral stalk. During catalysis, ATP synthesis in the catalytic domain of F(1) is coupled via a rotary mechanism of the central stalk subunits to proton translocation. In terms of biological role, component of the F(0) channel, it forms part of the peripheral stalk, linking F(1) to F(0). This is ATP synthase subunit b 1 from Crocosphaera subtropica (strain ATCC 51142 / BH68) (Cyanothece sp. (strain ATCC 51142)).